The primary structure comprises 247 residues: Adenosylcobinamide-GDP ribazoletransferase (247 aa).

Helical transmembrane passes span 31–51 (VVWFPAAGLVVGAAVALAAAL), 57–77 (PWLGALAGVVMWAWITGGLHL), 109–129 (FGVIVLVLQLAAKLVLLHWLL), 136–156 (PALVLIPAWTRWAAAGWTLLL), 189–209 (ITPIAFVALIPAVLWGVWMWL), and 218–238 (ILGAGIEWSESAALLLAGVSL).

The protein belongs to the CobS family. Mg(2+) is required as a cofactor.

Its subcellular location is the cell inner membrane. The enzyme catalyses alpha-ribazole + adenosylcob(III)inamide-GDP = adenosylcob(III)alamin + GMP + H(+). It carries out the reaction alpha-ribazole 5'-phosphate + adenosylcob(III)inamide-GDP = adenosylcob(III)alamin 5'-phosphate + GMP + H(+). It functions in the pathway cofactor biosynthesis; adenosylcobalamin biosynthesis; adenosylcobalamin from cob(II)yrinate a,c-diamide: step 7/7. Joins adenosylcobinamide-GDP and alpha-ribazole to generate adenosylcobalamin (Ado-cobalamin). Also synthesizes adenosylcobalamin 5'-phosphate from adenosylcobinamide-GDP and alpha-ribazole 5'-phosphate. In Thiobacillus denitrificans (strain ATCC 25259 / T1), this protein is Adenosylcobinamide-GDP ribazoletransferase.